The following is a 362-amino-acid chain: Atypical chemokine receptor 3 (362 aa).

At 1-40 (MDLHLFDYAEPGNFSDISWPCNSSDCIVVDTVLCPNMPNK) the chain is on the extracellular side. 3 N-linked (GlcNAc...) asparagine glycosylation sites follow: N13, N22, and N39. The helical transmembrane segment at 41–61 (SVLLYTLSFIYIFIFVIGMIA) threads the bilayer. Residues 62-81 (NSVVVWVNIQAKTTGYDTHC) lie on the Cytoplasmic side of the membrane. A helical transmembrane segment spans residues 82–102 (YILNLAIADLWVVVTIPVWVV). Residues 103–118 (SLVQHNQWPMGELTCK) lie on the Extracellular side of the membrane. C117 and C196 are disulfide-bonded. A helical membrane pass occupies residues 119 to 139 (ITHLIFSINLFGSIFFLTCMS). Topologically, residues 140 to 162 (VDRYLSITYFASTSSRRKKVVRR) are cytoplasmic. Residues 163–183 (AVCVLVWLLAFCVSLPDTYYL) traverse the membrane as a helical segment. Topologically, residues 184 to 213 (KTVTSASNNETYCRSFYPEHSVKEWLISME) are extracellular. A helical membrane pass occupies residues 214-234 (LVSVVLGFAIPFCVIAVFYCL). Over 235 to 252 (LARAISASSDQEKQSSRK) the chain is Cytoplasmic. A helical transmembrane segment spans residues 253–273 (IIFSYVVVFLVCWLPYHVVVL). Over 274–296 (LDIFSILHYIPFTCQLENFLFTA) the chain is Extracellular. Residues 297–319 (LHVTQCLSLVHCCVNPVLYSFIN) form a helical membrane-spanning segment. Residues 320–362 (RNYRYELMKAFIFKYSAKTGLTKLIDASRVSETEYSALEQNAK) are Cytoplasmic-facing. Residues 324–362 (YELMKAFIFKYSAKTGLTKLIDASRVSETEYSALEQNAK) are C-terminal cytoplasmic tail. S347, S350, and S355 each carry phosphoserine.

It belongs to the G-protein coupled receptor 1 family. Atypical chemokine receptor subfamily. Homodimer. Can form heterodimers with CXCR4; heterodimerization may regulate CXCR4 signaling activity. Interacts with ARRB1 and ARRB2. In terms of processing, the Ser/Thr residues in the C-terminal cytoplasmic tail may be phosphorylated. Post-translationally, ubiquitinated at the Lys residues in its C-terminal cytoplasmic tail and is essential for correct trafficking from and to the cell membrane. Deubiquitinated by CXCL12-stimulation in a reversible manner.

It is found in the cell membrane. The protein resides in the early endosome. It localises to the recycling endosome. Functionally, atypical chemokine receptor that controls chemokine levels and localization via high-affinity chemokine binding that is uncoupled from classic ligand-driven signal transduction cascades, resulting instead in chemokine sequestration, degradation, or transcytosis. Also known as interceptor (internalizing receptor) or chemokine-scavenging receptor or chemokine decoy receptor. Acts as a receptor for chemokines CXCL11 and CXCL12/SDF1. Chemokine binding does not activate G-protein-mediated signal transduction but instead induces beta-arrestin recruitment, leading to ligand internalization and activation of MAPK signaling pathway. Required for regulation of CXCR4 protein levels in migrating interneurons, thereby adapting their chemokine responsiveness. In glioma cells, transduces signals via MEK/ERK pathway, mediating resistance to apoptosis. Promotes cell growth and survival. Not involved in cell migration, adhesion or proliferation of normal hematopoietic progenitors but activated by CXCL11 in malignant hemapoietic cells, leading to phosphorylation of ERK1/2 (MAPK3/MAPK1) and enhanced cell adhesion and migration. Plays a regulatory role in CXCR4-mediated activation of cell surface integrins by CXCL12. Required for heart valve development. Regulates axon guidance in the oculomotor system through the regulation of CXCL12 levels. The chain is Atypical chemokine receptor 3 (ACKR3) from Canis lupus familiaris (Dog).